The primary structure comprises 82 residues: Transcription elongation factor 1 homolog (82 aa).

Zn(2+) contacts are provided by cysteine 26, cysteine 29, cysteine 50, and cysteine 53.

It belongs to the ELOF1 family.

The protein resides in the nucleus. Functionally, transcription elongation factor implicated in the maintenance of proper chromatin structure in actively transcribed regions. The polypeptide is Transcription elongation factor 1 homolog (Manduca sexta (Tobacco hawkmoth)).